The sequence spans 107 residues: Pro-corazonin (107 aa).

Residues 1–21 (MVNSQILILFILSLTITIVMC) form the signal peptide. Q22 carries the post-translational modification Pyrrolidone carboxylic acid. Position 32 is an asparagine amide (N32). Positions 88-107 (SFSENMINDHRQPAPTNNNY) are excised as a propeptide.

The protein belongs to the corazonin family. As to expression, in the adult brain, expressed in four neurons of the lateral protocerebrum project axons towards the retrocerebral complex.

Its subcellular location is the secreted. Its function is as follows. Cardioactive peptide. Corazonin is probably involved in the physiological regulation of the heart beat. This chain is Pro-corazonin, found in Apis mellifera (Honeybee).